Consider the following 130-residue polypeptide: Protein ApaG (130 aa).

The ApaG domain maps to 3 to 127 (KAETRGISVI…FSLDVPHMRR (125 aa)).

This Methylobacterium nodulans (strain LMG 21967 / CNCM I-2342 / ORS 2060) protein is Protein ApaG.